A 418-amino-acid polypeptide reads, in one-letter code: Coenzyme A biosynthesis bifunctional protein CoaBC (418 aa).

Positions M1–K195 are phosphopantothenoylcysteine decarboxylase. Residues L196–S418 are phosphopantothenate--cysteine ligase. Residues D285, K295, F336, K354, and K358 each coordinate CTP.

This sequence in the N-terminal section; belongs to the HFCD (homo-oligomeric flavin containing Cys decarboxylase) superfamily. In the C-terminal section; belongs to the PPC synthetase family. The cofactor is Mg(2+). It depends on FMN as a cofactor.

It catalyses the reaction N-[(R)-4-phosphopantothenoyl]-L-cysteine + H(+) = (R)-4'-phosphopantetheine + CO2. The enzyme catalyses (R)-4'-phosphopantothenate + L-cysteine + CTP = N-[(R)-4-phosphopantothenoyl]-L-cysteine + CMP + diphosphate + H(+). The protein operates within cofactor biosynthesis; coenzyme A biosynthesis; CoA from (R)-pantothenate: step 2/5. Its pathway is cofactor biosynthesis; coenzyme A biosynthesis; CoA from (R)-pantothenate: step 3/5. Its function is as follows. Catalyzes two sequential steps in the biosynthesis of coenzyme A. In the first step cysteine is conjugated to 4'-phosphopantothenate to form 4-phosphopantothenoylcysteine. In the second step the latter compound is decarboxylated to form 4'-phosphopantotheine. This Mycobacterium bovis (strain ATCC BAA-935 / AF2122/97) protein is Coenzyme A biosynthesis bifunctional protein CoaBC.